We begin with the raw amino-acid sequence, 588 residues long: Proline--tRNA ligase (588 aa).

This sequence belongs to the class-II aminoacyl-tRNA synthetase family. ProS type 1 subfamily. Homodimer.

The protein resides in the cytoplasm. It carries out the reaction tRNA(Pro) + L-proline + ATP = L-prolyl-tRNA(Pro) + AMP + diphosphate. Catalyzes the attachment of proline to tRNA(Pro) in a two-step reaction: proline is first activated by ATP to form Pro-AMP and then transferred to the acceptor end of tRNA(Pro). As ProRS can inadvertently accommodate and process non-cognate amino acids such as alanine and cysteine, to avoid such errors it has two additional distinct editing activities against alanine. One activity is designated as 'pretransfer' editing and involves the tRNA(Pro)-independent hydrolysis of activated Ala-AMP. The other activity is designated 'posttransfer' editing and involves deacylation of mischarged Ala-tRNA(Pro). The misacylated Cys-tRNA(Pro) is not edited by ProRS. This is Proline--tRNA ligase from Helicobacter hepaticus (strain ATCC 51449 / 3B1).